The sequence spans 283 residues: Elongation factor Ts (283 aa).

Positions 80–83 (TDFV) are involved in Mg(2+) ion dislocation from EF-Tu.

This sequence belongs to the EF-Ts family.

It localises to the cytoplasm. Functionally, associates with the EF-Tu.GDP complex and induces the exchange of GDP to GTP. It remains bound to the aminoacyl-tRNA.EF-Tu.GTP complex up to the GTP hydrolysis stage on the ribosome. The chain is Elongation factor Ts from Salmonella paratyphi A (strain ATCC 9150 / SARB42).